Consider the following 330-residue polypeptide: tRNA U34 carboxymethyltransferase (330 aa).

Carboxy-S-adenosyl-L-methionine-binding positions include K98, W112, K117, G137, 187-188 (ME), M203, Y207, and R322. Residues 309–330 (NPSKTIEGYPGPKRATLIAEKP) are disordered.

Belongs to the class I-like SAM-binding methyltransferase superfamily. CmoB family. In terms of assembly, homotetramer.

The catalysed reaction is carboxy-S-adenosyl-L-methionine + 5-hydroxyuridine(34) in tRNA = 5-carboxymethoxyuridine(34) in tRNA + S-adenosyl-L-homocysteine + H(+). Its function is as follows. Catalyzes carboxymethyl transfer from carboxy-S-adenosyl-L-methionine (Cx-SAM) to 5-hydroxyuridine (ho5U) to form 5-carboxymethoxyuridine (cmo5U) at position 34 in tRNAs. The chain is tRNA U34 carboxymethyltransferase from Marinobacter nauticus (strain ATCC 700491 / DSM 11845 / VT8) (Marinobacter aquaeolei).